The following is a 169-amino-acid chain: Large ribosomal subunit protein uL10 (169 aa).

It belongs to the universal ribosomal protein uL10 family. Part of the ribosomal stalk of the 50S ribosomal subunit. The N-terminus interacts with L11 and the large rRNA to form the base of the stalk. The C-terminus forms an elongated spine to which L12 dimers bind in a sequential fashion forming a multimeric L10(L12)X complex.

Functionally, forms part of the ribosomal stalk, playing a central role in the interaction of the ribosome with GTP-bound translation factors. In Rickettsia peacockii (strain Rustic), this protein is Large ribosomal subunit protein uL10.